Consider the following 841-residue polypeptide: Rho guanine nucleotide exchange factor 15 (841 aa).

3 disordered regions span residues 1–179 (MSAQ…QARA), 239–261 (RRASPLRTSRSRPHPPSIGHPAV), and 279–333 (KPPK…REEE). A compositionally biased stretch (polar residues) spans 39 to 53 (NGSSPQELPRNSNDA). The span at 65–110 (PPAASLKPPALLPPSASRASLDSQTSPDSPSSTPTPSPVSRRSASP) shows a compositional bias: low complexity. A phosphoserine mark is found at Ser-107 and Ser-109. A compositionally biased stretch (pro residues) spans 111–124 (EPAPRSPVPPPKPS). Phosphotyrosine; by EPHB2 is present on Tyr-353. Residues 417 to 601 (RMQESLFEVV…SKIIERCSAE (185 aa)) enclose the DH domain. Residues 765 to 793 (ESSAPAKTEGRSLESRAAPKHLHKTPEGW) are disordered.

Interacts with EPHB2. Interacts with EPHA4. Post-translationally, phosphorylated on tyrosine residues upon EFNA1 stimulation. EPHB2-dependent phosphorylation at Tyr-353 triggers UBE3A-mediated ubiquitination. In terms of processing, ubiquitinated; UBE3A-mediated ubiquitination and degradation by the proteasome promotes EFNB1-dependent synapse formation. Expressed in the vascular smooth muscle of coronary artery.

The protein localises to the cell projection. It is found in the dendrite. Specific GEF for RhoA activation. Does not activate RAC1 or CDC42. Regulates vascular smooth muscle contractility. Negatively regulates excitatory synapse development by suppressing the synapse-promoting activity of EPHB2. The polypeptide is Rho guanine nucleotide exchange factor 15 (ARHGEF15) (Homo sapiens (Human)).